We begin with the raw amino-acid sequence, 225 residues long: Uridylate kinase (225 aa).

9 to 10 is an ATP binding site; that stretch reads GS. Glycine 46 contributes to the UMP binding site. The ATP site is built by glycine 47 and arginine 51. Residues aspartate 67 and 115 to 121 each bind UMP; that span reads THPAHTT. Residues threonine 141, asparagine 142, tyrosine 147, and aspartate 150 each coordinate ATP.

It belongs to the UMP kinase family. Homohexamer.

It localises to the cytoplasm. It carries out the reaction UMP + ATP = UDP + ADP. Its pathway is pyrimidine metabolism; CTP biosynthesis via de novo pathway; UDP from UMP (UMPK route): step 1/1. With respect to regulation, inhibited by UTP. Its function is as follows. Catalyzes the reversible phosphorylation of UMP to UDP. The sequence is that of Uridylate kinase from Methanococcus maripaludis (strain C5 / ATCC BAA-1333).